Reading from the N-terminus, the 176-residue chain is MTTIVSVRRNGHVVIAGDGQATLGNTVMKGNVKKVRRLYNDKVIAGFAGGTADAFTLFELFERKLEMHQGHLVKAAVELAKDWRTDRMLRKLEALLAVADETASLIITGNGDVVQPENDLIAIGSGGPYAQAAARALLENTELGAREIAEKALDIAGDICIYTNHFHTIEELTAKA.

Residue threonine 2 is part of the active site. Na(+)-binding residues include glycine 157, cysteine 160, and threonine 163.

Belongs to the peptidase T1B family. HslV subfamily. A double ring-shaped homohexamer of HslV is capped on each side by a ring-shaped HslU homohexamer. The assembly of the HslU/HslV complex is dependent on binding of ATP.

It is found in the cytoplasm. The enzyme catalyses ATP-dependent cleavage of peptide bonds with broad specificity.. Its activity is regulated as follows. Allosterically activated by HslU binding. Functionally, protease subunit of a proteasome-like degradation complex believed to be a general protein degrading machinery. This chain is ATP-dependent protease subunit HslV, found in Salmonella agona (strain SL483).